The sequence spans 341 residues: Protein MENT (341 aa).

A signal peptide spans Met1 to Ala23. The disordered stretch occupies residues Ala115–Pro196. A compositionally biased stretch (polar residues) spans Ala127–Pro155.

In terms of processing, phosphorylation sites are present in the extracellular medium. In terms of tissue distribution, plasma. Overexpressed in lymphomas.

The protein localises to the secreted. Functionally, involved in control of cellular proliferation. Onconcogenic modifier contributing to the tumor suppressor function of DNMT3B. The sequence is that of Protein MENT (MENT) from Homo sapiens (Human).